The primary structure comprises 85 residues: Large ribosomal subunit protein bL27 (85 aa).

Positions 1–22 (MAHKKGASSTRNGRDSNAQRLG) are disordered. Over residues 7–19 (ASSTRNGRDSNAQ) the composition is skewed to polar residues.

Belongs to the bacterial ribosomal protein bL27 family.

This chain is Large ribosomal subunit protein bL27 (rpmA), found in Streptomyces griseus.